Reading from the N-terminus, the 168-residue chain is Cyclin-dependent kinase 4 inhibitor C (168 aa).

ANK repeat units lie at residues 4–33, 37–65, 69–98, 102–132, and 136–165; these read PWGN…NVNA, FGRT…NPNL, TGFA…DVNI, EGNL…NVGH, and KGDT…GGAT.

Belongs to the CDKN2 cyclin-dependent kinase inhibitor family. Heterodimer of p18 with CDK6.

In terms of biological role, interacts strongly with CDK6, weakly with CDK4. Inhibits cell growth and proliferation with a correlated dependence on endogenous retinoblastoma protein RB. The sequence is that of Cyclin-dependent kinase 4 inhibitor C (Cdkn2c) from Mus musculus (Mouse).